Here is a 163-residue protein sequence, read N- to C-terminus: Dual specificity phosphatase 28 (163 aa).

Positions 10 to 151 (PFARVAPALF…LQKYEQTLQA (142 aa)) constitute a Tyrosine-protein phosphatase domain. Catalysis depends on Cys-95, which acts as the Phosphocysteine intermediate.

The protein belongs to the protein-tyrosine phosphatase family. Non-receptor class dual specificity subfamily. In terms of assembly, monomer.

The enzyme catalyses O-phospho-L-tyrosyl-[protein] + H2O = L-tyrosyl-[protein] + phosphate. It carries out the reaction O-phospho-L-seryl-[protein] + H2O = L-seryl-[protein] + phosphate. It catalyses the reaction O-phospho-L-threonyl-[protein] + H2O = L-threonyl-[protein] + phosphate. Functionally, has phosphatase activity with the synthetic substrate 6,8-difluoro-4-methylumbelliferyl phosphate (in vitro). Has almost no detectable activity with phosphotyrosine, even less activity with phosphothreonine and displays complete lack of activity with phosphoserine. The poor activity with phosphotyrosine may be due to steric hindrance by bulky amino acid sidechains that obstruct access to the active site. The polypeptide is Dual specificity phosphatase 28 (Dusp28) (Mus musculus (Mouse)).